The following is a 385-amino-acid chain: Flap endonuclease 1 (385 aa).

The interval 1–104 (MGILGLSKLI…GELAKRAERR (104 aa)) is N-domain. Residue aspartate 34 participates in Mg(2+) binding. Positions 47 and 70 each coordinate DNA. 5 residues coordinate Mg(2+): aspartate 86, glutamate 158, glutamate 160, aspartate 179, and aspartate 181. An I-domain region spans residues 122–253 (GIEKFNRRLV…KRAIELINTY (132 aa)). DNA is bound at residue glutamate 158. 2 residues coordinate DNA: glycine 231 and aspartate 233. Position 233 (aspartate 233) interacts with Mg(2+). Positions 336–344 (TQVRLDSFF) are interaction with PCNA. The interval 346 to 385 (TLPSTPNATNAAKRKADEAKKSANNKKAKTSGGGRGRRPK) is disordered. Positions 368 to 385 (ANNKKAKTSGGGRGRRPK) are enriched in basic residues.

Belongs to the XPG/RAD2 endonuclease family. FEN1 subfamily. In terms of assembly, interacts with PCNA. Three molecules of FEN1 bind to one PCNA trimer with each molecule binding to one PCNA monomer. PCNA stimulates the nuclease activity without altering cleavage specificity. Mg(2+) is required as a cofactor. In terms of processing, phosphorylated. Phosphorylation upon DNA damage induces relocalization to the nuclear plasma.

It localises to the nucleus. It is found in the nucleolus. Its subcellular location is the nucleoplasm. The protein localises to the mitochondrion. In terms of biological role, structure-specific nuclease with 5'-flap endonuclease and 5'-3' exonuclease activities involved in DNA replication and repair. During DNA replication, cleaves the 5'-overhanging flap structure that is generated by displacement synthesis when DNA polymerase encounters the 5'-end of a downstream Okazaki fragment. It enters the flap from the 5'-end and then tracks to cleave the flap base, leaving a nick for ligation. Also involved in the long patch base excision repair (LP-BER) pathway, by cleaving within the apurinic/apyrimidinic (AP) site-terminated flap. Acts as a genome stabilization factor that prevents flaps from equilibrating into structures that lead to duplications and deletions. Also possesses 5'-3' exonuclease activity on nicked or gapped double-stranded DNA, and exhibits RNase H activity. Also involved in replication and repair of rDNA and in repairing mitochondrial DNA. This Drosophila sechellia (Fruit fly) protein is Flap endonuclease 1.